Here is a 307-residue protein sequence, read N- to C-terminus: UDP-3-O-acyl-N-acetylglucosamine deacetylase (307 aa).

Zn(2+)-binding residues include histidine 80, histidine 239, and aspartate 243. Residue histidine 266 is the Proton donor of the active site.

This sequence belongs to the LpxC family. Requires Zn(2+) as cofactor.

The catalysed reaction is a UDP-3-O-[(3R)-3-hydroxyacyl]-N-acetyl-alpha-D-glucosamine + H2O = a UDP-3-O-[(3R)-3-hydroxyacyl]-alpha-D-glucosamine + acetate. Its pathway is glycolipid biosynthesis; lipid IV(A) biosynthesis; lipid IV(A) from (3R)-3-hydroxytetradecanoyl-[acyl-carrier-protein] and UDP-N-acetyl-alpha-D-glucosamine: step 2/6. In terms of biological role, catalyzes the hydrolysis of UDP-3-O-myristoyl-N-acetylglucosamine to form UDP-3-O-myristoylglucosamine and acetate, the committed step in lipid A biosynthesis. In Neisseria meningitidis serogroup C (strain 053442), this protein is UDP-3-O-acyl-N-acetylglucosamine deacetylase.